The primary structure comprises 253 residues: DnaJ homolog subfamily C member 8 (253 aa).

The residue at position 2 (Ala-2) is an N-acetylalanine. Ser-35 is modified (phosphoserine). The J domain maps to Asn-57 to Gln-124. N6-acetyllysine is present on Lys-146. Positions Glu-181–Ser-222 are enriched in basic and acidic residues. Residues Glu-181–Glu-253 form a disordered region. 2 short sequence motifs (nuclear localization signal) span residues Lys-189 to Arg-192 and Lys-203 to Arg-206. Residue Ser-222 is modified to Phosphoserine. The segment covering Lys-231–Thr-240 has biased composition (basic residues). The segment at Gly-232 to Glu-253 is essential for polyglutamine aggregation suppression.

Interacts with SRPK1. Interacts with HSP70 (HSPA1A or HSPA1B). Ubiquitous.

Its subcellular location is the nucleus. Its function is as follows. Suppresses polyglutamine (polyQ) aggregation of ATXN3 in neuronal cells. The polypeptide is DnaJ homolog subfamily C member 8 (DNAJC8) (Homo sapiens (Human)).